The chain runs to 474 residues: Putative response regulator NtrX-like (474 aa).

A Response regulatory domain is found at 5–121 (DVLIVDDEES…KLVILLTRAC (117 aa)). The residue at position 54 (D54) is a 4-aspartylphosphate. One can recognise a Sigma-54 factor interaction domain in the interval 143 to 368 (LVGECSVTLK…LRNVVEWTLI (226 aa)). ATP contacts are provided by residues 171–178 (GKVGSGKE) and 231–240 (ANNGTLYIDE).

Functionally, member of the two-component regulatory system RC0849/RC0948. The chain is Putative response regulator NtrX-like from Rickettsia conorii (strain ATCC VR-613 / Malish 7).